A 161-amino-acid polypeptide reads, in one-letter code: SsrA-binding protein (161 aa).

Belongs to the SmpB family.

It is found in the cytoplasm. Required for rescue of stalled ribosomes mediated by trans-translation. Binds to transfer-messenger RNA (tmRNA), required for stable association of tmRNA with ribosomes. tmRNA and SmpB together mimic tRNA shape, replacing the anticodon stem-loop with SmpB. tmRNA is encoded by the ssrA gene; the 2 termini fold to resemble tRNA(Ala) and it encodes a 'tag peptide', a short internal open reading frame. During trans-translation Ala-aminoacylated tmRNA acts like a tRNA, entering the A-site of stalled ribosomes, displacing the stalled mRNA. The ribosome then switches to translate the ORF on the tmRNA; the nascent peptide is terminated with the 'tag peptide' encoded by the tmRNA and targeted for degradation. The ribosome is freed to recommence translation, which seems to be the essential function of trans-translation. The sequence is that of SsrA-binding protein from Vibrio vulnificus (strain YJ016).